The primary structure comprises 533 residues: D-2-hydroxyglutarate dehydrogenase, mitochondrial (533 aa).

Residues 1–55 (MGLFQKCSRLSLRSSYMWSVCPQYSIAVTARETPDRALIVHWTQHRDVHNSRRLG) constitute a mitochondrion transit peptide. Residues 107-286 (VQGSSDVLLR…TAVSILCPRK (180 aa)) form the FAD-binding PCMH-type domain. (R)-2-hydroxyglutarate contacts are provided by arginine 397, threonine 401, and lysine 412. Arginine 397 provides a ligand contact to (R)-lactate. (R)-malate is bound by residues arginine 397, threonine 401, and lysine 412. Zn(2+)-binding residues include histidine 445 and histidine 452. Asparagine 454 contacts (R)-2-hydroxyglutarate. Zn(2+) is bound at residue glutamate 486. Residue histidine 487 coordinates (R)-2-hydroxyglutarate. Histidine 487 contributes to the (R)-lactate binding site. A (R)-malate-binding site is contributed by histidine 487.

This sequence belongs to the FAD-binding oxidoreductase/transferase type 4 family. FAD serves as cofactor.

The protein localises to the mitochondrion. The enzyme catalyses (R)-2-hydroxyglutarate + A = 2-oxoglutarate + AH2. It catalyses the reaction (R)-malate + A = oxaloacetate + AH2. Catalyzes the oxidation of D-2-hydroxyglutarate (D-2-HG) to alpha-ketoglutarate. Also catalyzes the oxidation of other D-2-hydroxyacids, such as D-malate (D-MAL) and D-lactate (D-LAC). Exhibits high activities towards D-2-HG and D-MAL but a very weak activity towards D-LAC. This is D-2-hydroxyglutarate dehydrogenase, mitochondrial (d2hgdh) from Danio rerio (Zebrafish).